A 270-amino-acid chain; its full sequence is Tryptophan synthase alpha chain (270 aa).

Active-site proton acceptor residues include Glu-49 and Asp-60.

Belongs to the TrpA family. Tetramer of two alpha and two beta chains.

The catalysed reaction is (1S,2R)-1-C-(indol-3-yl)glycerol 3-phosphate + L-serine = D-glyceraldehyde 3-phosphate + L-tryptophan + H2O. Its pathway is amino-acid biosynthesis; L-tryptophan biosynthesis; L-tryptophan from chorismate: step 5/5. Functionally, the alpha subunit is responsible for the aldol cleavage of indoleglycerol phosphate to indole and glyceraldehyde 3-phosphate. This is Tryptophan synthase alpha chain from Pseudomonas fluorescens (strain ATCC BAA-477 / NRRL B-23932 / Pf-5).